A 92-amino-acid polypeptide reads, in one-letter code: Larval cuticle protein 9 (92 aa).

The N-terminal stretch at 1–16 (MKFVIVLACLLAVVFA) is a signal peptide. The 62-residue stretch at 31 to 92 (LLDFNYAYEL…TGYHPKVVEA (62 aa)) folds into the Chitin-binding type R&amp;R domain.

Functionally, component of the cuticle of the larva. This chain is Larval cuticle protein 9 (Lcp9), found in Drosophila melanogaster (Fruit fly).